A 222-amino-acid polypeptide reads, in one-letter code: Polyadenylate-binding protein 2 (222 aa).

Residues 1-43 (MTDNNNGEIVEDKDNEKLKGEDNINNHISNHNNTEETSFEDPE) form a disordered region. Positions 10–24 (VEDKDNEKLKGEDNI) are enriched in basic and acidic residues. The region spanning 101–178 (RSVYVGNVDY…RQLKITPKRT (78 aa)) is the RRM domain.

It is found in the nucleus. Involved in the 3'-end formation of mRNA precursors (pre-mRNA) by the addition of a poly(A) tail of 200-250 nt to the upstream cleavage product. The sequence is that of Polyadenylate-binding protein 2 (pabpn1) from Dictyostelium discoideum (Social amoeba).